The chain runs to 171 residues: Interleukin-26 (171 aa).

The signal sequence occupies residues methionine 1 to alanine 21.

The protein belongs to the IL-10 family. As to quaternary structure, homodimer. Expressed in HVS transformed T-cells but not other T-cell lines or primary stimulated T-cells. Expressed in colonic T-cells including Th17 inflammatory T-cells; the expression is significantly increased in serum of patients with Crohn's disease (at protein level).

The protein localises to the secreted. May play a role in local mechanisms of mucosal immunity and seems to have a pro-inflammatory function. May play a role in inflammatory bowel disease. Activates STAT1 and STAT3, MAPK1/3 (ERK1/2), JUN and AKT. Induces expression of SOCS3, TNF-alpha and IL-8, secretion of IL-8 and IL-10 and surface expression of ICAM1. Decreases proliferation of intestinal epithelial cells. Is inhibited by heparin. The protein is Interleukin-26 (IL26) of Homo sapiens (Human).